Consider the following 154-residue polypeptide: Putative pre-16S rRNA nuclease (154 aa).

This sequence belongs to the YqgF nuclease family.

It localises to the cytoplasm. Its function is as follows. Could be a nuclease involved in processing of the 5'-end of pre-16S rRNA. The polypeptide is Putative pre-16S rRNA nuclease (Rickettsia akari (strain Hartford)).